A 478-amino-acid polypeptide reads, in one-letter code: Trigger factor (478 aa).

Residues 154–167 (MAKDSRSFEPREEG) show a composition bias toward basic and acidic residues. Disordered stretches follow at residues 154-173 (MAKDSRSFEPREEGAEAQSG) and 441-478 (KEALFAEDDEADAVTGGAATDEKPSESNNEAAADKAAG). Positions 173–258 (GDRVTIDFVG…VKAVAAPGET (86 aa)) constitute a PPIase FKBP-type domain.

Belongs to the FKBP-type PPIase family. Tig subfamily.

The protein resides in the cytoplasm. The catalysed reaction is [protein]-peptidylproline (omega=180) = [protein]-peptidylproline (omega=0). Its function is as follows. Involved in protein export. Acts as a chaperone by maintaining the newly synthesized protein in an open conformation. Functions as a peptidyl-prolyl cis-trans isomerase. The chain is Trigger factor from Methylorubrum extorquens (strain CM4 / NCIMB 13688) (Methylobacterium extorquens).